A 103-amino-acid polypeptide reads, in one-letter code: Small ribosomal subunit protein uS10 (103 aa).

Residues 35 to 59 (LSGPVPLPTKTLEVPSRKSPDGEGT) form a disordered region.

This sequence belongs to the universal ribosomal protein uS10 family. In terms of assembly, part of the 30S ribosomal subunit.

Involved in the binding of tRNA to the ribosomes. The chain is Small ribosomal subunit protein uS10 (rps10) from Haloarcula marismortui (strain ATCC 43049 / DSM 3752 / JCM 8966 / VKM B-1809) (Halobacterium marismortui).